We begin with the raw amino-acid sequence, 738 residues long: MSENHDAIVTDAKTEEAGGCPVAHGRAPHPTQGGGNRQWWPERLNLKILAKNPAVANPLGDGFDYAEAFGSLDLPAVKRDIAEVLTTSQDWWPADFGHYGPLMIRMAWHSAGTYRISDGRGGAGAGQQRFAPLNSWPDNGNLDKARRLLWPVKKKYGQSLSWADLLILTGNVALEQMGFETFGFAGGRADVWEAEEDVYWGPETTWLDDRRYSGDRELENPLGAVQMGLIYVNPEGPNGNPDPIAAARDIRETFGRMAMNDEETVALIAGGHTFGKTHGAGPADHVGDDPEAASMEEQGLGWRNSFGTGKGGDAITSGLEVTWTSTPTRWSNGFFKNLFEFEYELEQSPAGANQWVAKDAPEIVPDAHDPSKKHRPKMLTTDLSLRYDPIYEPISRRFYENPEEFADAFARAWYKLTHRDMGPKSLYLGPEVPEETLLWQDPLPEADGEPVDAEDVATLKTKLLESGLSVSQLVSTAWASASTFRGSDKRGGANGARIRLEPQRGWEVNEPDELAQVLRVLEGIQQEFNSGTKKVSLADLIVLGGTAAVEKAAKEAGFQVQVPFTAGRVDATEEHTDAESFEALEPVADGFRNYLGKGNRLPAEYLLLDRANLLTLSAPEMTVLVGGLRVLGANYQKSPLGAFTRTPGSLTNDFFVNLLDLGVTWKSTSEDQTTFEGRDAATGEVKWAGSRADLVFGSNSELRALAEVYASDDAKEKFVHDFVDAWVKVMNLDRFDLV.

A compositionally biased stretch (basic and acidic residues) spans 1-16 (MSENHDAIVTDAKTEE). A disordered region spans residues 1–37 (MSENHDAIVTDAKTEEAGGCPVAHGRAPHPTQGGGNR). A cross-link (tryptophyl-tyrosyl-methioninium (Trp-Tyr) (with M-257)) is located at residues 108–231 (WHSAGTYRIS…LGAVQMGLIY (124 aa)). The active-site Proton acceptor is the His109. The segment at residues 231–257 (YVNPEGPNGNPDPIAAARDIRETFGRM) is a cross-link (tryptophyl-tyrosyl-methioninium (Tyr-Met) (with W-108)). Residue His272 participates in heme b binding.

It belongs to the peroxidase family. Peroxidase/catalase subfamily. As to quaternary structure, homodimer or homotetramer. The cofactor is heme b. Formation of the three residue Trp-Tyr-Met cross-link is important for the catalase, but not the peroxidase activity of the enzyme.

It carries out the reaction H2O2 + AH2 = A + 2 H2O. The catalysed reaction is 2 H2O2 = O2 + 2 H2O. Functionally, bifunctional enzyme with both catalase and broad-spectrum peroxidase activity. The sequence is that of Catalase-peroxidase from Streptomyces ambofaciens.